Reading from the N-terminus, the 175-residue chain is Translation initiation factor IF-3 (175 aa).

Belongs to the IF-3 family. As to quaternary structure, monomer.

Its subcellular location is the cytoplasm. IF-3 binds to the 30S ribosomal subunit and shifts the equilibrium between 70S ribosomes and their 50S and 30S subunits in favor of the free subunits, thus enhancing the availability of 30S subunits on which protein synthesis initiation begins. The polypeptide is Translation initiation factor IF-3 (Staphylococcus aureus (strain USA300)).